The primary structure comprises 157 residues: Ribosome maturation factor RimM (157 aa).

The PRC barrel domain occupies 89–156; it reads PGEYYHVDLI…DRLLIDPEFV (68 aa).

The protein belongs to the RimM family. In terms of assembly, binds ribosomal protein uS19.

The protein resides in the cytoplasm. Its function is as follows. An accessory protein needed during the final step in the assembly of 30S ribosomal subunit, possibly for assembly of the head region. Essential for efficient processing of 16S rRNA. May be needed both before and after RbfA during the maturation of 16S rRNA. It has affinity for free ribosomal 30S subunits but not for 70S ribosomes. In Rhizorhabdus wittichii (strain DSM 6014 / CCUG 31198 / JCM 15750 / NBRC 105917 / EY 4224 / RW1) (Sphingomonas wittichii), this protein is Ribosome maturation factor RimM.